The sequence spans 233 residues: Large ribosomal subunit protein uL1 (233 aa).

Belongs to the universal ribosomal protein uL1 family. In terms of assembly, part of the 50S ribosomal subunit.

In terms of biological role, binds directly to 23S rRNA. The L1 stalk is quite mobile in the ribosome, and is involved in E site tRNA release. Functionally, protein L1 is also a translational repressor protein, it controls the translation of the L11 operon by binding to its mRNA. This is Large ribosomal subunit protein uL1 from Campylobacter curvus (strain 525.92).